Consider the following 78-residue polypeptide: Large ribosomal subunit protein bL28 (78 aa).

Belongs to the bacterial ribosomal protein bL28 family.

The protein is Large ribosomal subunit protein bL28 of Synechococcus sp. (strain JA-2-3B'a(2-13)) (Cyanobacteria bacterium Yellowstone B-Prime).